The following is a 160-amino-acid chain: Eosinophil cationic protein (160 aa).

The first 27 residues, 1–27, serve as a signal peptide directing secretion; sequence MVPKLFTSQICLLLLLGLSGVGGSLHA. Residues 28–72 form a required for nearly all of the bactericidal activities; partially involved in LPS-binding region; it reads KPRQFTRAQWFAIQHVSLNPPQCTTAMRVINNYQRRCKDQNTFLR. His42 acts as the Proton acceptor in catalysis. 4 cysteine pairs are disulfide-bonded: Cys50-Cys110, Cys64-Cys123, Cys82-Cys138, and Cys89-Cys98. Tyr60 bears the 3'-nitrotyrosine mark. 65–69 is a binding site for substrate; sequence KDQNT. N-linked (GlcNAc...) asparagine glycans are attached at residues Asn86, Asn92, Asn111, and Asn119. The Proton donor role is filled by His155.

The protein belongs to the pancreatic ribonuclease family. Interacts with bacterial lipopolysaccharide (LPS) and lipoteichoic acid (LTA). In vitro interacts with phospholipid bilayers.

It is found in the secreted. Cytotoxin and helminthotoxin with low-efficiency ribonuclease activity. Possesses a wide variety of biological activities. Exhibits antibacterial activity. This Pongo pygmaeus (Bornean orangutan) protein is Eosinophil cationic protein (RNASE3).